We begin with the raw amino-acid sequence, 537 residues long: O-phosphoserine--tRNA(Cys) ligase (537 aa).

Substrate-binding positions include 186–188 (HMT), 231–233 (SAS), 273–274 (YY), and Asn-317.

Belongs to the class-II aminoacyl-tRNA synthetase family. O-phosphoseryl-tRNA(Cys) synthetase subfamily. Homotetramer. Interacts with SepCysS.

The catalysed reaction is tRNA(Cys) + O-phospho-L-serine + ATP = O-phospho-L-seryl-tRNA(Cys) + AMP + diphosphate. Functionally, catalyzes the attachment of O-phosphoserine (Sep) to tRNA(Cys). In Methanococcus vannielii (strain ATCC 35089 / DSM 1224 / JCM 13029 / OCM 148 / SB), this protein is O-phosphoserine--tRNA(Cys) ligase.